Consider the following 118-residue polypeptide: Dihydroneopterin aldolase (118 aa).

Substrate-binding positions include E21, Y53, and 72–73 (IE). The active-site Proton donor/acceptor is K98.

It belongs to the DHNA family.

It carries out the reaction 7,8-dihydroneopterin = 6-hydroxymethyl-7,8-dihydropterin + glycolaldehyde. The enzyme catalyses 7,8-dihydroneopterin = 7,8-dihydromonapterin. It participates in cofactor biosynthesis; tetrahydrofolate biosynthesis; 2-amino-4-hydroxy-6-hydroxymethyl-7,8-dihydropteridine diphosphate from 7,8-dihydroneopterin triphosphate: step 3/4. Functionally, catalyzes the conversion of 7,8-dihydroneopterin to 6-hydroxymethyl-7,8-dihydropterin. Can use L-threo-dihydroneopterin and D-erythro-dihydroneopterin as substrates for the formation of 6-hydroxymethyldihydropterin, but it can also catalyze the epimerization of carbon 2' of dihydroneopterin to dihydromonapterin. The polypeptide is Dihydroneopterin aldolase (folB) (Haemophilus influenzae (strain ATCC 51907 / DSM 11121 / KW20 / Rd)).